Here is a 141-residue protein sequence, read N- to C-terminus: Nucleoside diphosphate kinase (141 aa).

ATP contacts are provided by Lys9, Phe57, Arg85, Thr91, Arg102, and Asn112. Catalysis depends on His115, which acts as the Pros-phosphohistidine intermediate.

It belongs to the NDK family. As to quaternary structure, homotetramer. Mg(2+) is required as a cofactor.

It localises to the cytoplasm. It carries out the reaction a 2'-deoxyribonucleoside 5'-diphosphate + ATP = a 2'-deoxyribonucleoside 5'-triphosphate + ADP. It catalyses the reaction a ribonucleoside 5'-diphosphate + ATP = a ribonucleoside 5'-triphosphate + ADP. Its function is as follows. Major role in the synthesis of nucleoside triphosphates other than ATP. The ATP gamma phosphate is transferred to the NDP beta phosphate via a ping-pong mechanism, using a phosphorylated active-site intermediate. This Chlamydia muridarum (strain MoPn / Nigg) protein is Nucleoside diphosphate kinase.